The sequence spans 955 residues: Vacuolar membrane protease (955 aa).

The Cytoplasmic portion of the chain corresponds to 1–16 (MASLRLPRANPLAFTR). The helical transmembrane segment at 17 to 37 (WPVTVITAIVYLALLIPLLVV) threads the bilayer. Residues 38-390 (HHVVPSAPSS…STFVLFQLHT (353 aa)) are Vacuolar-facing. Residues asparagine 53 and asparagine 119 are each glycosylated (N-linked (GlcNAc...) asparagine). Positions 174 and 186 each coordinate Zn(2+). Catalysis depends on glutamate 220, which acts as the Proton acceptor. The Zn(2+) site is built by glutamate 221, glutamate 246, and histidine 319. Residues 391 to 411 (LFALLVTLLIVGPLTLLFTSI) traverse the membrane as a helical segment. The Cytoplasmic segment spans residues 412 to 442 (ALTKADKMYLFRSSAKSEDRLDVVPLQGLRG). The chain crosses the membrane as a helical span at residues 443–463 (FFRFPFLFGIPTVVTVGLAYL). The Vacuolar portion of the chain corresponds to 464–473 (VTKVNPYIIH). A helical membrane pass occupies residues 474-494 (SSAYAVWSMMVAAWVFLAWFV). Topologically, residues 495-508 (SRVADFARPSAFHR) are cytoplasmic. The helical transmembrane segment at 509-529 (IYTLTWMYVLSWVSAVIATVY) threads the bilayer. The Vacuolar portion of the chain corresponds to 530 to 533 (ANQR). The helical transmembrane segment at 534 to 554 (GLAGGYFIFFFHAGIFLAKWI) threads the bilayer. At 555 to 656 (SYLELFALPS…WSYALPKWTW (102 aa)) the chain is on the cytoplasmic side. Low complexity predominate over residues 574–590 (SASGRASGHGSRRGTTS). The tract at residues 574-611 (SASGRASGHGSRRGTTSGEDDGEEAEEEPTESTSLLGS) is disordered. Residues 591-603 (GEDDGEEAEEEPT) show a composition bias toward acidic residues. Residues 657 to 677 (VLQLLLTAPITLIMVGPLALL) form a helical membrane-spanning segment. Residues 678 to 693 (TISAISQTGQDGGHPL) lie on the Vacuolar side of the membrane. A helical membrane pass occupies residues 694–714 (FAYVAIAIFTTIMLTPLLPFI). The Cytoplasmic segment spans residues 715–721 (HRYTYHV). Residues 722-742 (PLFLLAVFLGTLIYNLVAFPF) form a helical membrane-spanning segment. Residues 743–955 (SDSNRLKLYY…RRAFEIGNDD (213 aa)) are Vacuolar-facing. Residue asparagine 826 is glycosylated (N-linked (GlcNAc...) asparagine).

This sequence belongs to the peptidase M28 family. Zn(2+) is required as a cofactor.

Its subcellular location is the vacuole membrane. Functionally, may be involved in vacuolar sorting and osmoregulation. In Aspergillus oryzae (strain ATCC 42149 / RIB 40) (Yellow koji mold), this protein is Vacuolar membrane protease.